A 67-amino-acid polypeptide reads, in one-letter code: Prokaryotic ubiquitin-like protein Pup (67 aa).

Residues 1–36 (MPQQFEQPQAQQAVTQEDDALATTQAATQTESTDQA) are compositionally biased toward low complexity. Residues 1 to 38 (MPQQFEQPQAQQAVTQEDDALATTQAATQTESTDQADV) are disordered. An ARC ATPase binding region spans residues 23–61 (TTQAATQTESTDQADVLDDILDDIESTLETNAEEYVNSF). Glutamate 67 is covalently cross-linked (Isoglutamyl lysine isopeptide (Glu-Lys) (interchain with K-? in acceptor proteins)).

This sequence belongs to the prokaryotic ubiquitin-like protein family. As to quaternary structure, strongly interacts with the proteasome-associated ATPase ARC through a hydrophobic interface; the interacting region of Pup lies in its C-terminal half. There is one Pup binding site per ARC hexamer ring.

It participates in protein degradation; proteasomal Pup-dependent pathway. Functionally, protein modifier that is covalently attached to lysine residues of substrate proteins, thereby targeting them for proteasomal degradation. The tagging system is termed pupylation. This is Prokaryotic ubiquitin-like protein Pup from Bifidobacterium longum subsp. infantis (strain ATCC 15697 / DSM 20088 / JCM 1222 / NCTC 11817 / S12).